A 237-amino-acid chain; its full sequence is LexA repressor (237 aa).

Positions 26–46 form a DNA-binding region, H-T-H motif; it reads FDEMKEALDLRSKSGIHRLIT. Active-site for autocatalytic cleavage activity residues include Ser158 and Lys196.

Belongs to the peptidase S24 family. As to quaternary structure, homodimer.

The catalysed reaction is Hydrolysis of Ala-|-Gly bond in repressor LexA.. Functionally, represses a number of genes involved in the response to DNA damage (SOS response), including recA and lexA. In the presence of single-stranded DNA, RecA interacts with LexA causing an autocatalytic cleavage which disrupts the DNA-binding part of LexA, leading to derepression of the SOS regulon and eventually DNA repair. The polypeptide is LexA repressor (Xanthobacter autotrophicus (strain ATCC BAA-1158 / Py2)).